Consider the following 451-residue polypeptide: Type 3 secretion system ATPase (451 aa).

An ATP-binding site is contributed by 184-189 (GGGKST).

This sequence belongs to the ATPase alpha/beta chains family. T3SS ATPase subfamily. The core secretion machinery of the T3SS is composed of approximately 20 different proteins, including cytoplasmic components, a base, an export apparatus and a needle. This subunit is part of the cytosolic complex. Forms homohexamers.

It localises to the cytoplasm. The enzyme catalyses ATP + H2O + cellular proteinSide 1 = ADP + phosphate + cellular proteinSide 2.. ATPase component of the type III secretion system (T3SS), also called injectisome, which is used to inject bacterial effector proteins into eukaryotic host cells. Acts as a molecular motor to provide the energy that is required for the export of proteins. Required for type III secretion apparatus (T3SA) formation, proper protein secretion, host cell invasion and virulence. May play a critical role in T3SS substrate recognition, disassembly of the effector/chaperone complex and unfolding of the effector in an ATP-dependent manner prior to secretion. The sequence is that of Type 3 secretion system ATPase from Sinorhizobium fredii (strain NBRC 101917 / NGR234).